The sequence spans 317 residues: Apolipoprotein E (317 aa).

Residues 1 to 18 form the signal peptide; the sequence is MKVLWAALLVTFLAGCQA. 8 tandem repeats follow at residues 80–101, 102–123, 124–145, 146–167, 168–189, 190–211, 212–233, and 234–255. An 8 X 22 AA approximate tandem repeats region spans residues 80 to 255; it reads ALMDETMKEL…RLDEVKEQVA (176 aa). M143 is modified (methionine sulfoxide). The residue at position 147 (S147) is a Phosphoserine. The segment at 158 to 168 is LDL and other lipoprotein receptors binding; that stretch reads HLRKLRKRLLR. 162-165 lines the heparin pocket; the sequence is LRKR. The interval 210-290 is lipid-binding and lipoprotein association; sequence AATVGSLAGQ…SWFEPLVEDM (81 aa). A heparin-binding site is contributed by 229–236; the sequence is GERLRARM. A homooligomerization region spans residues 266 to 317; the sequence is QQIRLQAEAFQARLKSWFEPLVEDMQRQWAGLVEKVQAAMGTSAAPVPSDNH. The tract at residues 278 to 290 is specificity for association with VLDL; that stretch reads RLKSWFEPLVEDM.

This sequence belongs to the apolipoprotein A1/A4/E family. As to quaternary structure, homotetramer. May interact with ABCA1; functionally associated with ABCA1 in the biogenesis of HDLs. May interact with APP/A4 amyloid-beta peptide; the interaction is extremely stable in vitro but its physiological significance is unclear. May interact with MAPT. May interact with MAP2. In the cerebrospinal fluid, interacts with secreted SORL1. Interacts with PMEL; this allows the loading of PMEL luminal fragment on ILVs to induce fibril nucleation. Post-translationally, APOE exists as multiple glycosylated and sialylated glycoforms within cells and in plasma. The extent of glycosylation and sialylation are tissue and context specific. Glycated in plasma VLDL. In terms of processing, phosphorylated by FAM20C in the extracellular medium.

It is found in the secreted. Its subcellular location is the extracellular space. The protein localises to the extracellular matrix. The protein resides in the extracellular vesicle. It localises to the endosome. It is found in the multivesicular body. Functionally, APOE is an apolipoprotein, a protein associating with lipid particles, that mainly functions in lipoprotein-mediated lipid transport between organs via the plasma and interstitial fluids. APOE is a core component of plasma lipoproteins and is involved in their production, conversion and clearance. Apolipoproteins are amphipathic molecules that interact both with lipids of the lipoprotein particle core and the aqueous environment of the plasma. As such, APOE associates with chylomicrons, chylomicron remnants, very low density lipoproteins (VLDL) and intermediate density lipoproteins (IDL) but shows a preferential binding to high-density lipoproteins (HDL). It also binds a wide range of cellular receptors including the LDL receptor/LDLR, the LDL receptor-related proteins LRP1, LRP2 and LRP8 and the very low-density lipoprotein receptor/VLDLR that mediate the cellular uptake of the APOE-containing lipoprotein particles. Finally, APOE also has a heparin-binding activity and binds heparan-sulfate proteoglycans on the surface of cells, a property that supports the capture and the receptor-mediated uptake of APOE-containing lipoproteins by cells. A main function of APOE is to mediate lipoprotein clearance through the uptake of chylomicrons, VLDLs, and HDLs by hepatocytes. APOE is also involved in the biosynthesis by the liver of VLDLs as well as their uptake by peripheral tissues ensuring the delivery of triglycerides and energy storage in muscle, heart and adipose tissues. By participating in the lipoprotein-mediated distribution of lipids among tissues, APOE plays a critical role in plasma and tissues lipid homeostasis. APOE is also involved in two steps of reverse cholesterol transport, the HDLs-mediated transport of cholesterol from peripheral tissues to the liver, and thereby plays an important role in cholesterol homeostasis. First, it is functionally associated with ABCA1 in the biogenesis of HDLs in tissues. Second, it is enriched in circulating HDLs and mediates their uptake by hepatocytes. APOE also plays an important role in lipid transport in the central nervous system, regulating neuron survival and sprouting. This is Apolipoprotein E (APOE) from Gorilla gorilla gorilla (Western lowland gorilla).